The chain runs to 222 residues: Protein ORM1 (222 aa).

A disordered region spans residues 1–57 (MTELDYQGTAEAASTSYSRNQTDLKPFPSAGSASSSIKTTEPVKDHRRRRSSSIISH). Residues 1–85 (MTELDYQGTA…NATWVDQRGA (85 aa)) lie on the Cytoplasmic side of the membrane. Over residues 12 to 23 (AASTSYSRNQTD) the composition is skewed to polar residues. 3 positions are modified to phosphoserine: Ser-29, Ser-32, and Ser-56. The chain crosses the membrane as a helical span at residues 86 to 106 (WIIHVVIIILLKLFYNLFPGV). Residues 107-109 (TTE) lie on the Extracellular side of the membrane. The chain crosses the membrane as a helical span at residues 110-130 (WSWTLTNMTYVIGSYVMFHLI). The Cytoplasmic portion of the chain corresponds to 131–162 (KGTPFDFNGGAYDNLTMWEQIDDETLYTPSRK). Residues 163–183 (FLISVPIALFLVSTHYAHYDL) traverse the membrane as a helical segment. A topological domain (extracellular) is located at residue Lys-184. A helical transmembrane segment spans residues 185-205 (LFSWNCFLTTFGAVVPKLPVT). The Cytoplasmic portion of the chain corresponds to 206 to 222 (HRLRISIPGITGRAQIS).

Belongs to the ORM family. As to quaternary structure, component of the SPOTS complex, at least composed of LCB1/2 (LCB1 and/or LCB2), ORM1/2 (ORM1 and/or ORM2), SAC1 and TSC3. Phosphorylated in case of disruption of sphingolipid synthesis. Phosphorylation regulates inhibitory activity of serine palmitoyltransferases (LCB1 and LCB2).

It is found in the endoplasmic reticulum membrane. Its function is as follows. Component of the SPOTS complex that acts as a negative regulator of sphingolipid synthesis. Acts by inhibiting serine palmitoyltransferases (LCB1 and LCB2) activity. Along with ORM2, plays a role in the phosphorylation of LAC1 and YPK1, the distribution of actin patches between mother and daughter cells, and in endocytosis. Disruption or inhibition of sphingolipid synthesis leads to the activation and phosphorylation of YPK1 through the TORC2 and PKH1 pathways, which in turn phosphorylates ORM1 and LAG1 to activate sphingolipid synthesis. The chain is Protein ORM1 (ORM1) from Saccharomyces cerevisiae (strain ATCC 204508 / S288c) (Baker's yeast).